The chain runs to 482 residues: UDP-N-acetylmuramate--L-alanine ligase (482 aa).

111–117 (GTHGKTT) serves as a coordination point for ATP.

This sequence belongs to the MurCDEF family.

It localises to the cytoplasm. It catalyses the reaction UDP-N-acetyl-alpha-D-muramate + L-alanine + ATP = UDP-N-acetyl-alpha-D-muramoyl-L-alanine + ADP + phosphate + H(+). It functions in the pathway cell wall biogenesis; peptidoglycan biosynthesis. Functionally, cell wall formation. This chain is UDP-N-acetylmuramate--L-alanine ligase, found in Symbiobacterium thermophilum (strain DSM 24528 / JCM 14929 / IAM 14863 / T).